A 719-amino-acid chain; its full sequence is Exonuclease mut-7 homolog (719 aa).

Residues 1-22 (MSKSNNVAPPCRQDQLGFVPAG) form a disordered region. Positions 575-629 (NLANLVRLCLGKKLDKSNQFSNWAQRPLRKEQLRYAALDAFCLLEIYDAIEKQLT) constitute a 3'-5' exonuclease domain. The disordered stretch occupies residues 644 to 719 (NDVRPPSDSG…FEGPNTKSVL (76 aa)). Residues 667 to 678 (RRNHRDKYNKRH) show a composition bias toward basic residues. Polar residues-rich tracts occupy residues 683–692 (DSNSGNSSRA) and 706–719 (EQQT…KSVL).

The protein belongs to the mut-7 family. The cofactor is Mg(2+).

Possesses 3'-5' exoribonuclease activity. Required for 3'-end trimming of AGO1-bound miRNAs. The protein is Exonuclease mut-7 homolog of Aedes aegypti (Yellowfever mosquito).